A 260-amino-acid chain; its full sequence is Large ribosomal subunit protein uL30 (260 aa).

At Met1 the chain carries N-acetylmethionine. A run of 5 repeats spans residues 7 to 18 (KKKKVAAALGTL), 19 to 30 (KKKKVPAVPETL), 31 to 42 (KKKRRNFAELKV), 43 to 54 (KRLRKKFALKTL), and 55 to 66 (RKARRKLIYEKA). The tract at residues 7-66 (KKKKVAAALGTLKKKKVPAVPETLKKKRRNFAELKVKRLRKKFALKTLRKARRKLIYEKA) is 5 X 12 AA tandem repeats. Phosphothreonine is present on Thr29. An N6-acetyllysine modification is found at Lys136. Lys139 is modified (N6-succinyllysine). Phosphotyrosine is present on Tyr151.

It belongs to the universal ribosomal protein uL30 family. In terms of assembly, component of the large ribosomal subunit. Homodimer. Interacts with DHX33.

Its subcellular location is the cytoplasm. Functionally, component of the large ribosomal subunit. The ribosome is a large ribonucleoprotein complex responsible for the synthesis of proteins in the cell. Binds to G-rich structures in 28S rRNA and in mRNAs. Plays a regulatory role in the translation apparatus; inhibits cell-free translation of mRNAs. In Rattus norvegicus (Rat), this protein is Large ribosomal subunit protein uL30 (Rpl7).